Reading from the N-terminus, the 393-residue chain is Phosphoglycerate kinase (393 aa).

Substrate-binding positions include 21 to 23 (DFN), R37, 60 to 63 (HLGR), R119, and R152. ATP contacts are provided by residues K202, G291, E322, and 348–351 (GGDT).

This sequence belongs to the phosphoglycerate kinase family. As to quaternary structure, monomer.

It is found in the cytoplasm. The catalysed reaction is (2R)-3-phosphoglycerate + ATP = (2R)-3-phospho-glyceroyl phosphate + ADP. It participates in carbohydrate degradation; glycolysis; pyruvate from D-glyceraldehyde 3-phosphate: step 2/5. This chain is Phosphoglycerate kinase, found in Coprothermobacter proteolyticus (strain ATCC 35245 / DSM 5265 / OCM 4 / BT).